The following is a 218-amino-acid chain: Ribose-5-phosphate isomerase A (218 aa).

Substrate contacts are provided by residues Lys7, 28 to 31 (TGST), 81 to 84 (DGAD), and 94 to 97 (KGGG). Glu103 acts as the Proton acceptor in catalysis. A substrate-binding site is contributed by Lys121.

It belongs to the ribose 5-phosphate isomerase family. In terms of assembly, homodimer.

It carries out the reaction aldehydo-D-ribose 5-phosphate = D-ribulose 5-phosphate. Its pathway is carbohydrate degradation; pentose phosphate pathway; D-ribose 5-phosphate from D-ribulose 5-phosphate (non-oxidative stage): step 1/1. Functionally, catalyzes the reversible conversion of ribose-5-phosphate to ribulose 5-phosphate. The sequence is that of Ribose-5-phosphate isomerase A from Vibrio vulnificus (strain YJ016).